The following is a 490-amino-acid chain: Flap endonuclease 1 (490 aa).

Positions 1–106 are N-domain; sequence MGIKGLTKFL…DELTKRDERR (106 aa). Aspartate 34 provides a ligand contact to Mg(2+). The DNA site is built by arginine 47 and arginine 72. The Mg(2+) site is built by aspartate 88, glutamate 160, glutamate 162, aspartate 181, and aspartate 183. Residues 124 to 266 form an I-domain region; the sequence is LIKKQSVRTI…STAYKLLKKY (143 aa). Glutamate 160 contacts DNA. Positions 244 and 246 each coordinate DNA. Aspartate 246 contributes to the Mg(2+) binding site. The tract at residues 351–359 is interaction with PCNA; the sequence is SQTCLDGFF. Disordered stretches follow at residues 364-396 and 421-490; these read NERK…SLSC and SSQA…SDED. A compositionally biased stretch (polar residues) spans 430–442; sequence ENSSEAPNQSSEI. A compositionally biased stretch (basic and acidic residues) spans 443-454; the sequence is KVNKIEENKDSE. Residues 455-469 show a composition bias toward polar residues; that stretch reads SSTVENTPSLQTKSP.

Belongs to the XPG/RAD2 endonuclease family. FEN1 subfamily. As to quaternary structure, interacts with PCNA. Three molecules of FEN1 bind to one PCNA trimer with each molecule binding to one PCNA monomer. PCNA stimulates the nuclease activity without altering cleavage specificity. It depends on Mg(2+) as a cofactor. In terms of processing, phosphorylated. Phosphorylation upon DNA damage induces relocalization to the nuclear plasma.

It is found in the nucleus. Its subcellular location is the nucleolus. It localises to the nucleoplasm. The protein localises to the mitochondrion. Functionally, structure-specific nuclease with 5'-flap endonuclease and 5'-3' exonuclease activities involved in DNA replication and repair. During DNA replication, cleaves the 5'-overhanging flap structure that is generated by displacement synthesis when DNA polymerase encounters the 5'-end of a downstream Okazaki fragment. It enters the flap from the 5'-end and then tracks to cleave the flap base, leaving a nick for ligation. Also involved in the long patch base excision repair (LP-BER) pathway, by cleaving within the apurinic/apyrimidinic (AP) site-terminated flap. Acts as a genome stabilization factor that prevents flaps from equilibrating into structures that lead to duplications and deletions. Also possesses 5'-3' exonuclease activity on nicked or gapped double-stranded DNA, and exhibits RNase H activity. Also involved in replication and repair of rDNA and in repairing mitochondrial DNA. The chain is Flap endonuclease 1 from Cryptosporidium parvum (strain Iowa II).